We begin with the raw amino-acid sequence, 347 residues long: G-protein coupled receptor homolog U12 (347 aa).

The next 6 helical transmembrane spans lie at Gly36–Tyr56, Phe67–Thr87, Leu103–Thr124, Ile147–Thr167, Ile194–Ile214, and Ile236–Ile256. A disulfide bond links Cys101 and Cys176. The interval Gln321–Leu347 is disordered. Over residues Lys322 to Val341 the composition is skewed to basic and acidic residues.

The protein belongs to the G-protein coupled receptor 1 family.

Its subcellular location is the membrane. Probable G-protein coupled receptor. This Homo sapiens (Human) protein is G-protein coupled receptor homolog U12 (U12).